We begin with the raw amino-acid sequence, 528 residues long: Sphingosine-1-phosphate lyase (528 aa).

The chain crosses the membrane as a helical span at residues Pro13 to Thr35. Lys324 is modified (N6-(pyridoxal phosphate)lysine).

This sequence belongs to the group II decarboxylase family. Sphingosine-1-phosphate lyase subfamily. Pyridoxal 5'-phosphate serves as cofactor.

It is found in the endoplasmic reticulum membrane. It catalyses the reaction sphinganine 1-phosphate = hexadecanal + phosphoethanolamine. It functions in the pathway lipid metabolism; sphingolipid metabolism. Functionally, cleaves phosphorylated sphingoid bases (PSBs), such as sphingosine-1-phosphate, into fatty aldehydes and phosphoethanolamine. Sphingosine-1-phosphate (S1P) probably acts intracellularly as a second messenger perhaps by promoting cell proliferation; the absence of S1P lyase increases its concentration. This leads to increased lateral pseudopod formation as well as defects in the efficiency of chemotaxis. Overexpression of S1P lyase causes decreased growth rates, entry into stationary phase at lower cell density and increased sensitivity to the antitumor agents cisplatin and carboplatin; these effects are more pronounced in cells that express more enzyme. The polypeptide is Sphingosine-1-phosphate lyase (sglA) (Dictyostelium discoideum (Social amoeba)).